The primary structure comprises 157 residues: Cytochrome c-type biogenesis protein CcmE (157 aa).

Residues 1 to 8 (MNPLRRKR) lie on the Cytoplasmic side of the membrane. Residues 9-29 (LLIILAVLGGVGLALTLALSA) form a helical; Signal-anchor for type II membrane protein membrane-spanning segment. At 30-157 (LKENINLFYT…ASMPARQADR (128 aa)) the chain is on the periplasmic side. H124 and Y128 together coordinate heme. A disordered region spans residues 132 to 157 (EVSKALRESGQATPAPASMPARQADR).

It belongs to the CcmE/CycJ family.

The protein resides in the cell inner membrane. Functionally, heme chaperone required for the biogenesis of c-type cytochromes. Transiently binds heme delivered by CcmC and transfers the heme to apo-cytochromes in a process facilitated by CcmF and CcmH. This is Cytochrome c-type biogenesis protein CcmE from Pseudomonas syringae pv. tomato (strain ATCC BAA-871 / DC3000).